Here is a 54-residue protein sequence, read N- to C-terminus: Small ribosomal subunit protein uS14 (54 aa).

Cys-19, Cys-22, Cys-37, and Cys-40 together coordinate Zn(2+).

Belongs to the universal ribosomal protein uS14 family. Zinc-binding uS14 subfamily. In terms of assembly, part of the 30S ribosomal subunit. Requires Zn(2+) as cofactor.

Functionally, binds 16S rRNA, required for the assembly of 30S particles. The protein is Small ribosomal subunit protein uS14 of Aeropyrum pernix (strain ATCC 700893 / DSM 11879 / JCM 9820 / NBRC 100138 / K1).